We begin with the raw amino-acid sequence, 2111 residues long: Fatty acid synthase beta subunit aflB (2111 aa).

An acetyltransferase (AT) domain region spans residues 200–565 (IVTVFNGQGV…KAGTAARVIL (366 aa)). Positions 618-863 (SRALGLPPVM…AIVDTPGVPD (246 aa)) are enoyl reductase (ER) domain. Residues 1195–1688 (GTKPSWRKAL…SPGETLLVDI (494 aa)) form a dehydratase (DH) domain region. The 103-residue stretch at 1606 to 1708 (EMPTSSDQYA…IVVATARSES (103 aa)) folds into the MaoC-like domain. Residues 1727 to 2091 (YLFTGQGSQK…FENVLAISES (365 aa)) form a malonyl/palmitoyl transferase (MT/PT) domain region.

This sequence belongs to the fungal fatty acid synthetase subunit beta family. [Alpha(6)beta(6)] hexamers of two multifunctional subunits (alpha and beta).

The catalysed reaction is acetyl-CoA + n malonyl-CoA + 2n NADPH + 4n H(+) = a long-chain-acyl-CoA + n CoA + n CO2 + 2n NADP(+).. It catalyses the reaction holo-[ACP] + acetyl-CoA = acetyl-[ACP] + CoA. The enzyme catalyses holo-[ACP] + malonyl-CoA = malonyl-[ACP] + CoA. It carries out the reaction a (3R)-hydroxyacyl-[ACP] = a (2E)-enoyl-[ACP] + H2O. The catalysed reaction is a 2,3-saturated acyl-[ACP] + NAD(+) = a (2E)-enoyl-[ACP] + NADH + H(+). It catalyses the reaction (9Z)-octadecenoyl-[ACP] + H2O = (9Z)-octadecenoate + holo-[ACP] + H(+). It participates in secondary metabolite biosynthesis. Fatty acid synthase beta subunit; part of the gene cluster that mediates the biosynthesis of aspercryptins, linear lipopeptides built from six amino acids including 2 highly unusual and nonproteogenic amino acids, 2-amino-octanoic acid (2aoa) and 2-amino-dodecanol (2adol). The core structure of aspercryptins is as follows: Ser/Ala-Thr-Ile/Val-2aoa-Asn-2adol. The first step of aspercryptin biosynthesis is the generation of the fatty acid precursors, octanoic and dodecanoic acids, by the FAS subunits atnF and atnM. The fatty acid precursors are likely transformed into the corresponding alpha-amino fatty acids in three steps. First, they are hydroxylated by the cytochrome P450 monooxygenase atnE, then oxidized to the corresponding alpha-keto acids by the NAD(P)-dependent oxidoreductase atnD, and finally converted to the alpha-amino fatty acids by the PLP-dependent aminotransferases atnH or atnJ. the alpha-amino fatty acids, 2-amino-octanoic and 2-amino-dodecanoic acids, are recognized, activated, and covalently tethered to the NRPS atnA by its fourth and sixth adenylation domains. The second module of atnA is the Thr module and contains an epimerase (E) domain responsible for the epimerization of Thr to D-allo-Thr. Additionally, despite atnA having only one epimerase domain, the first amino acid of aspercryptin A1 is D-Ser, suggesting that serine is either loaded directly as D-Ser on the first module or that the epimerase domain in the threonine module epimerizes both L-Ser and L-Thr. After condensation of the hexapeptide of aspercryptin, the C-terminal reductase (TE) domain might be involved in the reductive release and production of the aldehyde hexapeptide. Further reduction would generate aspercryptins. The variety of aspercryptins produced reflects the flexibility of the atnA NRPS, allowing incorporation of alanine instead of serine, valine for isoleucine, and a C10 fatty amino alcohol instead of the C12 version. AtnB seems to be involved in the selectivity for Ile versus Val by the third module. Moreover, type B, C and D aspercryptins have an additional N-terminal cichorine, acetyl and propionyl group respectively. The protein is Fatty acid synthase beta subunit aflB of Emericella nidulans (strain FGSC A4 / ATCC 38163 / CBS 112.46 / NRRL 194 / M139) (Aspergillus nidulans).